We begin with the raw amino-acid sequence, 147 residues long: Ponticulin-like protein C5 (147 aa).

The first 20 residues, 1-20 (MKLNNSLLLLIVAIIASSNA), serve as a signal peptide directing secretion. Asn-118 carries the GPI-like-anchor amidated asparagine lipid modification. Asn-118 carries N-linked (GlcNAc...) asparagine glycosylation. A propeptide spans 119–147 (SSESDSSDSTRIGASFALFALALLSMLAL) (removed in mature form).

It belongs to the ponticulin family. Post-translationally, the GPI-like-anchor contains a phosphoceramide group, rather than a phosphatidyl group.

Its subcellular location is the cell membrane. This chain is Ponticulin-like protein C5 (ponC5), found in Dictyostelium discoideum (Social amoeba).